A 190-amino-acid chain; its full sequence is Large ribosomal subunit protein bL25 (190 aa).

This sequence belongs to the bacterial ribosomal protein bL25 family. CTC subfamily. In terms of assembly, part of the 50S ribosomal subunit; part of the 5S rRNA/L5/L18/L25 subcomplex. Contacts the 5S rRNA. Binds to the 5S rRNA independently of L5 and L18.

Functionally, this is one of the proteins that binds to the 5S RNA in the ribosome where it forms part of the central protuberance. In Neisseria meningitidis serogroup C (strain 053442), this protein is Large ribosomal subunit protein bL25.